Here is a 259-residue protein sequence, read N- to C-terminus: DNA repair protein RecO (259 aa).

This sequence belongs to the RecO family.

Involved in DNA repair and RecF pathway recombination. This Chloroherpeton thalassium (strain ATCC 35110 / GB-78) protein is DNA repair protein RecO.